The following is a 454-amino-acid chain: Rhizobactin siderophore biosynthesis protein RhbE (454 aa).

7–13 contacts FAD; it reads AGIGIGP.

Belongs to the lysine N(6)-hydroxylase/L-ornithine N(5)-oxygenase family. FAD serves as cofactor.

It functions in the pathway siderophore biosynthesis; rhizobactin biosynthesis. The protein is Rhizobactin siderophore biosynthesis protein RhbE (rhbE) of Rhizobium meliloti (strain 1021) (Ensifer meliloti).